The primary structure comprises 2360 residues: Nucleoprotein TPR (2360 aa).

An N-acetylalanine modification is found at A2. The segment at 3–13 (AVLQQVLERPE) is sufficient for interaction with TPR. A necessary for interaction with HSF1 region spans residues 14–117 (LNKLPKSTQN…GIQSQFTRAK (104 aa)). Residues 24–370 (KLEKFLAEQQ…SATKRKGAIL (347 aa)) are a coiled coil. 3 positions are modified to N6-acetyllysine: K252, K312, and K345. S379 carries the post-translational modification Phosphoserine. Positions 423 to 603 (LDEIVKEVEA…RESRQHQMQL (181 aa)) form a coiled coil. N6-acetyllysine is present on residues K428, K457, and K477. The tract at residues 437–513 (LKRQREEYER…LMELEEARGN (77 aa)) is necessary for association to the NPC. 3 positions are modified to phosphoserine: S522, S523, and S632. Residues 664-1172 (ETIEAKAALK…IEKLSDKVVT (509 aa)) adopt a coiled-coil conformation. K713, K723, K748, and K755 each carry N6-acetyllysine. Positions 915 to 924 (LASQSTQRTG) are enriched in polar residues. The interval 915–939 (LASQSTQRTGKGQPGDRDDVDDLKS) is disordered. Residues 928–939 (PGDRDDVDDLKS) are compositionally biased toward basic and acidic residues. Phosphoserine is present on residues S1180 and S1185. 2 coiled-coil regions span residues 1215-1420 (EVAQ…LDAK) and 1472-1629 (VQEM…QRDE). The necessary for interaction with HSF1 stretch occupies residues 1218–1320 (QVESLRYRQR…NAELSEKSGM (103 aa)). Disordered regions lie at residues 1479–1520 (KDNL…TAQL) and 1618–1673 (EHQE…PTPV). Basic and acidic residues-rich tracts occupy residues 1503–1512 (LSEKETEARS) and 1618–1630 (EHQERHLEQRDEP). Residues 1632–1651 (EPTNKAPEQQRQITLKTTPA) show a composition bias toward polar residues. K1689 bears the N6-acetyllysine mark. At T1691 the chain carries Phosphothreonine. The segment covering 1801 to 1826 (QSSPVERPSTSTAVFGTVSATPSSSL) has biased composition (polar residues). The segment at 1801 to 2122 (QSSPVERPST…TPGIGGMQQH (322 aa)) is disordered. The sufficient and essential for mediating its nuclear import stretch occupies residues 1811-1866 (STAVFGTVSATPSSSLPKRAREEEEDSTIEAGDQVSDDTVEMPLPKKLKTVTPVGT). Positions 1866–1880 (TEEEVMAEESTDGEA) are enriched in acidic residues. A compositionally biased stretch (polar residues) spans 1881–1892 (ETQTYNQDSQDS). At S1892 the chain carries Phosphoserine. A compositionally biased stretch (low complexity) spans 1923-1934 (QSDQQTTSSQDG). 2 stretches are compositionally biased toward acidic residues: residues 1945-1986 (DSDD…EDSN) and 1996-2017 (DGYEADDAEGGDGTDPGTETEE). The span at 2023–2061 (ESNQRAADSQNSGEGNTSAAESSFSQEVAREQQPTSASE) shows a compositional bias: polar residues. Phosphoserine is present on residues S2031, S2034, S2045, S2047, and S2070. Omega-N-methylarginine is present on residues R2103 and R2108. T2113 and T2134 each carry phosphothreonine. S2152 is subject to Phosphoserine. An Omega-N-methylarginine modification is found at R2160. Positions 2224–2241 (ESTTSDASEHASQSVPMV) are enriched in polar residues. The disordered stretch occupies residues 2224–2360 (ESTTSDASEH…RGGINRGNIN (137 aa)). Over residues 2242–2254 (TTSTGTLSTTNET) the composition is skewed to low complexity. Composition is skewed to acidic residues over residues 2256–2269 (AGDDGDEVFVETES) and 2282–2296 (SQQEEEPVQASDESD). Low complexity predominate over residues 2297–2317 (LPSTSQDPPSSSSVDTSSSQP). 3 positions are modified to asymmetric dimethylarginine: R2340, R2342, and R2351. Gly residues predominate over residues 2349-2360 (GGRGGINRGNIN).

Belongs to the TPR family. In terms of assembly, homodimer. Part of the nuclear pore complex (NPC). Associates with the XPO1/CRM1-mediated nuclear export complex, the Importin alpha/Importin beta receptor and the dynein 1 complex. Interacts (via C-terminal domain) with the KPNB1; the interaction occurs in a RanGTP-dependent manner. Interacts (via C-terminal region and phosphorylated form) with MAPK1/ERK2 (via phosphorylated form); the interaction requires dimerization of MAPK1/ERK2 and increases following EGF stimulation. Interacts with MAPK3/ERK1; the interaction increases following EGF stimulation. Interacts (via coiled coil region) with NUP153; the interaction is direct. Interacts with HSF1; the interaction increases in a stress-responsive manner and stimulates export of stress-induced HSP70 mRNA. Interacts with huntingtin/HTT; the interaction is inhibited by aggregated huntingtin/HTT forms with expanded polyglutamine stretch. Interacts with MAD1L1 (via N-terminal region), MAD2L1, and TTK; the interactions occurs in a microtubule-independent manner. Interacts (via middle region) with DYNLL1. Interacts with DCTN1, dynein, NUP153 and tubulin. Interacts with IFI204 (via C-terminal region). Interacts with IFI203. Interacts with MTA1. Interacts with ZC3HC1; this interaction mediates ZC3HC1 nuclear envelopes (NE)-association but also required for proper positioning of a substantial amount of TPR at the nuclear basket (NB). In terms of processing, phosphorylated. Phosphorylation occurs on serine and threonine residues (comprised in the C-terminal region) by MAPK1/ERK2 and stabilizes the interaction between these two proteins.

The protein resides in the nucleus. It localises to the nucleus membrane. It is found in the nucleus envelope. The protein localises to the nuclear pore complex. Its subcellular location is the cytoplasm. The protein resides in the cytoskeleton. It localises to the spindle. It is found in the chromosome. The protein localises to the centromere. Its subcellular location is the kinetochore. Component of the nuclear pore complex (NPC), a complex required for the trafficking across the nuclear envelope. Functions as a scaffolding element in the nuclear phase of the NPC essential for normal nucleocytoplasmic transport of proteins and mRNAs, plays a role in the establishment of nuclear-peripheral chromatin compartmentalization in interphase, and in the mitotic spindle checkpoint signaling during mitosis. Involved in the quality control and retention of unspliced mRNAs in the nucleus; in association with NUP153, regulates the nuclear export of unspliced mRNA species bearing constitutive transport element (CTE) in a NXF1- and KHDRBS1-independent manner. Negatively regulates both the association of CTE-containing mRNA with large polyribosomes and translation initiation. Does not play any role in Rev response element (RRE)-mediated export of unspliced mRNAs. Implicated in nuclear export of mRNAs transcribed from heat shock gene promoters; associates both with chromatin in the HSP70 promoter and with mRNAs transcribed from this promoter under stress-induced conditions. Modulates the nucleocytoplasmic transport of activated MAPK1/ERK2 and huntingtin/HTT and may serve as a docking site for the XPO1/CRM1-mediated nuclear export complex. Also plays a role as a structural and functional element of the perinuclear chromatin distribution; involved in the formation and/or maintenance of NPC-associated perinuclear heterochromatin exclusion zones (HEZs). Finally, acts as a spatial regulator of the spindle-assembly checkpoint (SAC) response ensuring a timely and effective recruitment of spindle checkpoint proteins like MAD1L1 and MAD2L1 to unattached kinetochore during the metaphase-anaphase transition before chromosome congression. Its N-terminus is involved in activation of oncogenic kinases. Plays a role in the regulation of nuclear protein export. The protein is Nucleoprotein TPR of Rattus norvegicus (Rat).